Reading from the N-terminus, the 1354-residue chain is Tensin homolog (1354 aa).

The 170-residue stretch at 38–207 (MKDRKEGVQV…GYFSSLLSGR (170 aa)) folds into the Phosphatase tensin-type domain. The active-site Phosphocysteine intermediate is C144. In terms of domain architecture, C2 tensin-type spans 212–337 (SDPLYLHNII…VTVELVVSHT (126 aa)). Disordered stretches follow at residues 380–442 (EYSE…DVVP), 597–616 (STLQ…RTLN), 638–660 (SNTA…SVQL), 692–720 (DVRG…NNTP), 734–754 (SVTT…EADA), 794–879 (AANN…DRQR), and 1015–1035 (NGER…HNGY). Polar residues predominate over residues 391–401 (SSKSANPINNN). Pro residues predominate over residues 408 to 417 (VGPPVPPKPS). 3 stretches are compositionally biased toward polar residues: residues 704–720 (HNAS…NNTP), 734–747 (SVTT…STPS), and 794–804 (AANNDENQHNL). The span at 821–843 (AEFRREEERLRNTRSPYGEERWR) shows a compositional bias: basic and acidic residues. Residues 1017 to 1033 (ERGGSGHAAGGGGGGHN) are compositionally biased toward gly residues. An SH2 domain is found at 1083-1187 (WYKPTISREQ…ALPTKLVLPD (105 aa)). Residues 1209 to 1353 (ACNVVYVGSV…NKVMLAQKNR (145 aa)) enclose the PTB domain.

This sequence belongs to the PTEN phosphatase protein family. In terms of assembly, may interact (via SH2 domain) with receptor svh-2 (when tyrosine-phosphorylated). May interact (via C-terminus) with integrin pat-3. As to expression, expressed in ventral motor neurons, including ventral and dorsal D-type neurons, and in a subset of cells in the head.

The protein resides in the cell projection. It localises to the axon. It carries out the reaction O-phospho-L-tyrosyl-[protein] + H2O = L-tyrosyl-[protein] + phosphate. Probable phosphatase which regulates axon regeneration after injury by linking the svh-2 and integrin signaling pathways. Its function is as follows. Not involved in axon regeneration after injury. This is Tensin homolog from Caenorhabditis elegans.